Consider the following 456-residue polypeptide: Adenylosuccinate lyase (456 aa).

Residues 15 to 16, 90 to 92, and 122 to 123 each bind N(6)-(1,2-dicarboxyethyl)-AMP; these read RY, NHD, and TS. Catalysis depends on His-171, which acts as the Proton donor/acceptor. Gln-247 contributes to the N(6)-(1,2-dicarboxyethyl)-AMP binding site. Ser-295 (proton donor/acceptor) is an active-site residue. Residues Ser-296, 301–303, Asn-309, Arg-335, and 340–344 each bind N(6)-(1,2-dicarboxyethyl)-AMP; these read KIN and STVLR.

The protein belongs to the lyase 1 family. Adenylosuccinate lyase subfamily. Homotetramer. Residues from neighboring subunits contribute catalytic and substrate-binding residues to each active site.

The enzyme catalyses N(6)-(1,2-dicarboxyethyl)-AMP = fumarate + AMP. It carries out the reaction (2S)-2-[5-amino-1-(5-phospho-beta-D-ribosyl)imidazole-4-carboxamido]succinate = 5-amino-1-(5-phospho-beta-D-ribosyl)imidazole-4-carboxamide + fumarate. The protein operates within purine metabolism; AMP biosynthesis via de novo pathway; AMP from IMP: step 2/2. It functions in the pathway purine metabolism; IMP biosynthesis via de novo pathway; 5-amino-1-(5-phospho-D-ribosyl)imidazole-4-carboxamide from 5-amino-1-(5-phospho-D-ribosyl)imidazole-4-carboxylate: step 2/2. In terms of biological role, catalyzes two reactions in de novo purine nucleotide biosynthesis. Catalyzes the breakdown of 5-aminoimidazole- (N-succinylocarboxamide) ribotide (SAICAR or 2-[5-amino-1-(5-phospho-beta-D-ribosyl)imidazole-4-carboxamido]succinate) to 5-aminoimidazole-4-carboxamide ribotide (AICAR or 5-amino-1-(5-phospho-beta-D-ribosyl)imidazole-4-carboxamide) and fumarate, and of adenylosuccinate (ADS or N(6)-(1,2-dicarboxyethyl)-AMP) to adenosine monophosphate (AMP) and fumarate. The chain is Adenylosuccinate lyase (purB) from Buchnera aphidicola subsp. Schizaphis graminum (strain Sg).